Consider the following 542-residue polypeptide: Exopolysaccharide phosphotransferase CpsY (542 aa).

The disordered stretch occupies residues 522–542 (SPTVSAPLEDGQTANPAQTAR). Residues 533–542 (QTANPAQTAR) show a composition bias toward polar residues.

The protein belongs to the stealth family.

The sequence is that of Exopolysaccharide phosphotransferase CpsY (cpsY) from Mycobacterium leprae (strain TN).